Here is a 371-residue protein sequence, read N- to C-terminus: Deoxyhypusine synthase (371 aa).

Residues 112 to 116 (SNLVT), 138 to 140 (SAG), Glu-144, and Asp-245 each bind NAD(+). 143–144 (EE) is a spermidine binding site. Residue Asp-250 coordinates spermidine. Residue Gly-291 coordinates NAD(+). His-296 serves as a coordination point for spermidine. An NAD(+)-binding site is contributed by 316-317 (TG). Spermidine is bound by residues 322-324 (GSD) and 331-337 (EAVSWGK). Lys-337 acts as the Nucleophile in catalysis. 350–351 (EA) is an NAD(+) binding site.

Belongs to the deoxyhypusine synthase family. The cofactor is NAD(+).

The catalysed reaction is [eIF5A protein]-L-lysine + spermidine = [eIF5A protein]-deoxyhypusine + propane-1,3-diamine. It functions in the pathway protein modification; eIF5A hypusination. In terms of biological role, catalyzes the NAD-dependent oxidative cleavage of spermidine and the subsequent transfer of the butylamine moiety of spermidine to the epsilon-amino group of a critical lysine residue of the eIF-5A precursor protein to form the intermediate deoxyhypusine residue. This is the first step of the post-translational modification of that lysine into an unusual amino acid residue named hypusine. Hypusination is unique to mature eIF-5A factor and is essential for its function. The polypeptide is Deoxyhypusine synthase (Caenorhabditis elegans).